A 315-amino-acid polypeptide reads, in one-letter code: 1,2-dihydroxy-3,5-cyclohexadiene-1,4-dicarboxylate dehydrogenase (315 aa).

A divalent metal cation is bound by residues His-159, His-203, and His-255.

Belongs to the PdxA family.

The catalysed reaction is (3S,4R)-3,4-dihydroxycyclohexa-1,5-diene-1,4-dicarboxylate + NAD(+) = 3,4-dihydroxybenzoate + CO2 + NADH. In terms of biological role, involved in the degradation of terephthalate (TPA) via the protocatechuate (PCA) 4,5-cleavage pathway. Catalyzes the dehydrogenation of 1,2-dihydroxy-3,5-cyclohexadiene-1,4-dicarboxylate (DCD) to yield protocatechuate (PCA). In Comamonas sp, this protein is 1,2-dihydroxy-3,5-cyclohexadiene-1,4-dicarboxylate dehydrogenase (tphBI).